An 81-amino-acid chain; its full sequence is ATP synthase subunit c, chloroplastic (81 aa).

Transmembrane regions (helical) follow at residues proline 3–glycine 23 and leucine 57–alanine 77.

This sequence belongs to the ATPase C chain family. As to quaternary structure, F-type ATPases have 2 components, F(1) - the catalytic core - and F(0) - the membrane proton channel. F(1) has five subunits: alpha(3), beta(3), gamma(1), delta(1), epsilon(1). F(0) has four main subunits: a(1), b(1), b'(1) and c(10-14). The alpha and beta chains form an alternating ring which encloses part of the gamma chain. F(1) is attached to F(0) by a central stalk formed by the gamma and epsilon chains, while a peripheral stalk is formed by the delta, b and b' chains.

The protein resides in the plastid. It is found in the chloroplast thylakoid membrane. Functionally, f(1)F(0) ATP synthase produces ATP from ADP in the presence of a proton or sodium gradient. F-type ATPases consist of two structural domains, F(1) containing the extramembraneous catalytic core and F(0) containing the membrane proton channel, linked together by a central stalk and a peripheral stalk. During catalysis, ATP synthesis in the catalytic domain of F(1) is coupled via a rotary mechanism of the central stalk subunits to proton translocation. Its function is as follows. Key component of the F(0) channel; it plays a direct role in translocation across the membrane. A homomeric c-ring of between 10-14 subunits forms the central stalk rotor element with the F(1) delta and epsilon subunits. The sequence is that of ATP synthase subunit c, chloroplastic from Ipomoea purpurea (Common morning glory).